The following is a 241-amino-acid chain: Ribose-5-phosphate isomerase A (241 aa).

Residues 29 to 32 (TGTT), 84 to 87 (DGAD), and 97 to 100 (KGGG) contribute to the substrate site. Glu-106 (proton acceptor) is an active-site residue. Residue Lys-124 coordinates substrate.

Belongs to the ribose 5-phosphate isomerase family. As to quaternary structure, homodimer.

The catalysed reaction is aldehydo-D-ribose 5-phosphate = D-ribulose 5-phosphate. The protein operates within carbohydrate degradation; pentose phosphate pathway; D-ribose 5-phosphate from D-ribulose 5-phosphate (non-oxidative stage): step 1/1. Catalyzes the reversible conversion of ribose-5-phosphate to ribulose 5-phosphate. This is Ribose-5-phosphate isomerase A from Thermoplasma acidophilum (strain ATCC 25905 / DSM 1728 / JCM 9062 / NBRC 15155 / AMRC-C165).